We begin with the raw amino-acid sequence, 509 residues long: MSPADTARPQLKIRSVALDTGRENVVVISRRSRALRPEVFSGFSRVELRCNSRTLLATLLITDDDALVGPDEIGLSEPALRRFAEPAGMLATVSPATPPESLEAVRAKIRGETLSDEAIAAVIEDLAHYRYSDMEIAAFLIGSASFMTSGELLALTHAMANAGTQLTWPEPVVVDKHCIGGIPGNRTSMVVVPIVAAHGLTIPKTSSRAITSPAGTADTMEVLARVNVGAEEMKSIVAACNGCVIWGGHVNLSPADDILISVERPLSLDTREQMVASILSKKLAAGSTHLLLDLPVGPTAKLTSGAEAMRLRKLFEFVGDRFGLKVEVITTDGRQPIGHGIGPVLEARDVMAVLGNEPQAPADLREKSLRLAAHLLEYDPKLRGGAGYSRARELLDSGAALKQMQKIIDAQGPSAGRSELGDLAFDVGAASDGVVSAIDCLRLNRLARTAGAPVNKGAGIRLYKKIGDRVDQGEPLYRVFTCDPSEHDLAAAAASANNGYVLDGPNGPH.

Belongs to the thymidine/pyrimidine-nucleoside phosphorylase family. Type 2 subfamily.

It carries out the reaction thymidine + phosphate = 2-deoxy-alpha-D-ribose 1-phosphate + thymine. This chain is Putative thymidine phosphorylase, found in Bradyrhizobium sp. (strain ORS 278).